We begin with the raw amino-acid sequence, 271 residues long: Bifunctional protein FolD (271 aa).

NADP(+)-binding positions include 154–156 (GRS), Thr-181, and Ile-222.

The protein belongs to the tetrahydrofolate dehydrogenase/cyclohydrolase family. Homodimer.

It catalyses the reaction (6R)-5,10-methylene-5,6,7,8-tetrahydrofolate + NADP(+) = (6R)-5,10-methenyltetrahydrofolate + NADPH. The catalysed reaction is (6R)-5,10-methenyltetrahydrofolate + H2O = (6R)-10-formyltetrahydrofolate + H(+). Its pathway is one-carbon metabolism; tetrahydrofolate interconversion. In terms of biological role, catalyzes the oxidation of 5,10-methylenetetrahydrofolate to 5,10-methenyltetrahydrofolate and then the hydrolysis of 5,10-methenyltetrahydrofolate to 10-formyltetrahydrofolate. The polypeptide is Bifunctional protein FolD (Thermosipho africanus (strain TCF52B)).